The primary structure comprises 501 residues: MPSASASRKSQEKPREIMDAAEDYAKERYGISSMIQSQEKPDRVLVRVRDLTIQKADEVVWVRARVHTSRAKGKQCFLVLRQQQFNVQALVAVGDHASKQMVKFAANINKESIVDVEGVVRKVNQKIGSCTQQDVELHVQKIYVISLAEPRLPLQLDDAVRPEAEGEEEGRATVNQDTRLDNRVIDLRTSTSQAVFRLQSGICHLFRETLINKGFVEIQTPKIISAASEGGANVFTVSYFKNNAYLAQSPQLYKQMCICADFEKVFSIGPVFRAEDSNTHRHLTEFVGLDIEMAFNYHYHEVMEEIADTMVQIFKGLQERFQTEIQTVNKQFPCEPFKFLEPTLRLEYCEALAMLREAGVEMGDEDDLSTPNEKLLGHLVKEKYDTDFYILDKYPLAVRPFYTMPDPRNPKQSNSYDMFMRGEEILSGAQRIHDPQLLTERALHHGIDLEKIKAYIDSFRFGAPPHAGGGIGLERVTMLFLGLHNVRQTSMFPRDPKRLTP.

Residue Thr52 is modified to Phosphothreonine. Lys74 carries the N6-acetyllysine modification. Glu229 provides a ligand contact to L-aspartate. Ser249 carries the post-translational modification Phosphoserine. An aspartate region spans residues 251–254 (QLYK). L-aspartate is bound at residue Arg273. ATP-binding positions include 273–275 (RAE) and 281–283 (RHL). The residue at position 374 (Lys374) is an N6-acetyllysine. Residues 411-415 (KQSNS) are binding site for the 3'-end of tRNA. An ATP-binding site is contributed by Glu424. Residues Ser427 and Arg431 each contribute to the L-aspartate site. Residue 472–475 (GLER) coordinates ATP. Thr500 is modified (phosphothreonine; by PKA).

This sequence belongs to the class-II aminoacyl-tRNA synthetase family. Type 2 subfamily. As to quaternary structure, homodimer. Part of a multisubunit complex that groups tRNA ligases for Arg (RARS1), Asp (DARS1), Gln (QARS1), Ile (IARS1), Leu (LARS1), Lys (KARS1), Met (MARS1) the bifunctional ligase for Glu and Pro (EPRS1) and the auxiliary subunits AIMP1/p43, AIMP2/p38 and EEF1E1/p18. Expression in the developing and adult brain shows similar patterns. Highly expressed in the ventricular and subventricular zones, including hippocampal subfields, the midlateral temporal cortex and the frontal polar cortex. The cerebellum, cerebral cortex, hippocampus, and lateral ventricle show preferential neuronal expression. Expression in the peripheral neurons is evident in the colon.

The protein resides in the cytoplasm. It is found in the cytosol. It carries out the reaction tRNA(Asp) + L-aspartate + ATP = L-aspartyl-tRNA(Asp) + AMP + diphosphate. In terms of biological role, catalyzes the specific attachment of an amino acid to its cognate tRNA in a 2 step reaction: the amino acid (AA) is first activated by ATP to form AA-AMP and then transferred to the acceptor end of the tRNA. This is Aspartate--tRNA ligase, cytoplasmic from Homo sapiens (Human).